A 651-amino-acid chain; its full sequence is Acetyl-coenzyme A synthetase (651 aa).

CoA contacts are provided by residues 193–196 (RRGK) and Thr-312. Residues 388–390 (GEP), 412–417 (DTWWQT), Asp-501, and Arg-516 contribute to the ATP site. Ser-524 provides a ligand contact to CoA. Val-538, His-540, and Val-543 together coordinate Mg(2+). Lys-610 is subject to N6-acetyllysine.

Belongs to the ATP-dependent AMP-binding enzyme family. Mg(2+) is required as a cofactor. Acetylated. Deacetylation by the SIR2-homolog deacetylase activates the enzyme.

The catalysed reaction is acetate + ATP + CoA = acetyl-CoA + AMP + diphosphate. Catalyzes the conversion of acetate into acetyl-CoA (AcCoA), an essential intermediate at the junction of anabolic and catabolic pathways. AcsA undergoes a two-step reaction. In the first half reaction, AcsA combines acetate with ATP to form acetyl-adenylate (AcAMP) intermediate. In the second half reaction, it can then transfer the acetyl group from AcAMP to the sulfhydryl group of CoA, forming the product AcCoA. The polypeptide is Acetyl-coenzyme A synthetase (Streptomyces coelicolor (strain ATCC BAA-471 / A3(2) / M145)).